The chain runs to 1057 residues: Carbamoyl phosphate synthase large chain (1057 aa).

The tract at residues 1 to 401 (MPKRDDIQTI…SLLKAIRSLE (401 aa)) is carboxyphosphate synthetic domain. Positions 129, 169, 175, 176, 208, 210, 215, 241, 242, 243, 284, and 298 each coordinate ATP. In terms of domain architecture, ATP-grasp 1 spans 133–327 (RTLMNDLNVP…IAKLAAKIAV (195 aa)). Positions 284, 298, and 300 each coordinate Mg(2+). Residues Gln284, Glu298, and Asn300 each contribute to the Mn(2+) site. An oligomerization domain region spans residues 402-546 (YGVHHLGLPN…YGTYEDENES (145 aa)). A carbamoyl phosphate synthetic domain region spans residues 547 to 929 (IVTDKEKILV…ALYKGLTGSG (383 aa)). Positions 671-861 (EALLREISVP…MAQLAMRAIM (191 aa)) constitute an ATP-grasp 2 domain. Arg707, Arg746, Leu748, Glu752, Gly777, Val778, His779, Ser780, Gln820, and Glu832 together coordinate ATP. Gln820, Glu832, and Asn834 together coordinate Mg(2+). Mn(2+) is bound by residues Gln820, Glu832, and Asn834. In terms of domain architecture, MGS-like spans 930–1057 (FEVKDHGTVL…ESMTFTMRNV (128 aa)). Residues 930–1057 (FEVKDHGTVL…ESMTFTMRNV (128 aa)) are allosteric domain.

Belongs to the CarB family. In terms of assembly, composed of two chains; the small (or glutamine) chain promotes the hydrolysis of glutamine to ammonia, which is used by the large (or ammonia) chain to synthesize carbamoyl phosphate. Tetramer of heterodimers (alpha,beta)4. The cofactor is Mg(2+). Requires Mn(2+) as cofactor.

It catalyses the reaction hydrogencarbonate + L-glutamine + 2 ATP + H2O = carbamoyl phosphate + L-glutamate + 2 ADP + phosphate + 2 H(+). The catalysed reaction is hydrogencarbonate + NH4(+) + 2 ATP = carbamoyl phosphate + 2 ADP + phosphate + 2 H(+). Its pathway is amino-acid biosynthesis; L-arginine biosynthesis; carbamoyl phosphate from bicarbonate: step 1/1. It participates in pyrimidine metabolism; UMP biosynthesis via de novo pathway; (S)-dihydroorotate from bicarbonate: step 1/3. Its function is as follows. Large subunit of the glutamine-dependent carbamoyl phosphate synthetase (CPSase). CPSase catalyzes the formation of carbamoyl phosphate from the ammonia moiety of glutamine, carbonate, and phosphate donated by ATP, constituting the first step of 2 biosynthetic pathways, one leading to arginine and/or urea and the other to pyrimidine nucleotides. The large subunit (synthetase) binds the substrates ammonia (free or transferred from glutamine from the small subunit), hydrogencarbonate and ATP and carries out an ATP-coupled ligase reaction, activating hydrogencarbonate by forming carboxy phosphate which reacts with ammonia to form carbamoyl phosphate. This is Carbamoyl phosphate synthase large chain from Staphylococcus epidermidis (strain ATCC 35984 / DSM 28319 / BCRC 17069 / CCUG 31568 / BM 3577 / RP62A).